Reading from the N-terminus, the 455-residue chain is Phosphoglucosamine/phosphogalactosamine mutase (455 aa).

S97 functions as the Phosphoserine intermediate in the catalytic mechanism. 4 residues coordinate Mg(2+): S97, D241, D243, and D245. Position 97 is a phosphoserine (S97).

It belongs to the phosphohexose mutase family. Requires Mg(2+) as cofactor. Post-translationally, activated by phosphorylation.

It carries out the reaction alpha-D-glucosamine 1-phosphate = D-glucosamine 6-phosphate. The catalysed reaction is D-galactosamine 6-phosphate = alpha-D-galactosamine 1-phosphate. In terms of biological role, involved in the synthesis of UDP-N-acetylglucosamine (UDP-GlcNAc) and UDP-N-acetylgalactosamine (UDP-GalNAc). Catalyzes the conversion of glucosamine-6-phosphate to glucosamine-1-phosphate and of galactosamine-6-phosphate to galactosamine-1-phosphate. In Sulfurisphaera tokodaii (strain DSM 16993 / JCM 10545 / NBRC 100140 / 7) (Sulfolobus tokodaii), this protein is Phosphoglucosamine/phosphogalactosamine mutase.